The following is a 193-amino-acid chain: Ion-translocating oxidoreductase complex subunit A (193 aa).

6 consecutive transmembrane segments (helical) span residues 5–25 (ILLIISTALINNFVLVKFLGL), 39–59 (IGMGLATMFVLTVASLCAYLV), 72–92 (LRTLIFILVIAVVVQFTEMVI), 102–122 (LLGIFLPLITTNCAVLGVALL), 134–154 (VIYGFSASLGFSLVLVLFAAL), and 171–191 (SIALITAGLMSLAFMGFSGLV).

The protein belongs to the NqrDE/RnfAE family. As to quaternary structure, the complex is composed of six subunits: RnfA, RnfB, RnfC, RnfD, RnfE and RnfG.

The protein localises to the cell inner membrane. Part of a membrane-bound complex that couples electron transfer with translocation of ions across the membrane. This Histophilus somni (strain 129Pt) (Haemophilus somnus) protein is Ion-translocating oxidoreductase complex subunit A.